The following is a 317-amino-acid chain: Ribosomal protein L11 methyltransferase (317 aa).

4 residues coordinate S-adenosyl-L-methionine: Thr158, Gly179, Asp201, and Asn244.

This sequence belongs to the methyltransferase superfamily. PrmA family.

It is found in the cytoplasm. It carries out the reaction L-lysyl-[protein] + 3 S-adenosyl-L-methionine = N(6),N(6),N(6)-trimethyl-L-lysyl-[protein] + 3 S-adenosyl-L-homocysteine + 3 H(+). Functionally, methylates ribosomal protein L11. The sequence is that of Ribosomal protein L11 methyltransferase from Lactococcus lactis subsp. cremoris (strain MG1363).